Consider the following 226-residue polypeptide: Enolase-phosphatase E1 (226 aa).

Belongs to the HAD-like hydrolase superfamily. MasA/MtnC family. As to quaternary structure, monomer. Mg(2+) is required as a cofactor.

The enzyme catalyses 5-methylsulfanyl-2,3-dioxopentyl phosphate + H2O = 1,2-dihydroxy-5-(methylsulfanyl)pent-1-en-3-one + phosphate. It functions in the pathway amino-acid biosynthesis; L-methionine biosynthesis via salvage pathway; L-methionine from S-methyl-5-thio-alpha-D-ribose 1-phosphate: step 3/6. It participates in amino-acid biosynthesis; L-methionine biosynthesis via salvage pathway; L-methionine from S-methyl-5-thio-alpha-D-ribose 1-phosphate: step 4/6. Its function is as follows. Bifunctional enzyme that catalyzes the enolization of 2,3-diketo-5-methylthiopentyl-1-phosphate (DK-MTP-1-P) into the intermediate 2-hydroxy-3-keto-5-methylthiopentenyl-1-phosphate (HK-MTPenyl-1-P), which is then dephosphorylated to form the acireductone 1,2-dihydroxy-3-keto-5-methylthiopentene (DHK-MTPene). This Shewanella baltica (strain OS195) protein is Enolase-phosphatase E1.